Here is a 348-residue protein sequence, read N- to C-terminus: MFEDQTFEAIMERMLNSISADIDTREGSVIYNALAPAAAELAKSYIWLDTVLELVFSDTAQGEFLDRRAAEAGIERTAATKAVRAGEFTSGVTIPVGSRFYVDNLYFQYTADGTLICETPGEAGNANLTGRNLLSLDTIPGLETAIVKEILIPGREEEGDDSLRERYFTRVRREAVSANKMHYKEWAEEVDGVGKAKIFPLWNGEGTVKIVVTNANLEPASPILIQKVKDYIDPEPGQGEGQAPIGAVVTVESAVWKEVEISAEVLPEINHSIDEVKSEIEEGVLNFFKKMAFEDNVIRLSQINNIVYNSPSVSDYSNIQINGTSENLVLSDVEIPKLGQVKIIEQTR.

It belongs to the Mu gp47/PBSX XkdT family.

The sequence is that of Phage-like element PBSX protein XkdT (xkdT) from Bacillus subtilis (strain 168).